A 202-amino-acid chain; its full sequence is Na(+)-translocating NADH-quinone reductase subunit E (202 aa).

6 helical membrane-spanning segments follow: residues 11–31 (SVFI…FIAV), 35–55 (IETA…TVPA), 81–101 (FIAL…LEMV), 114–134 (GIFL…LFMI), 144–164 (VVYG…MAGV), and 180–200 (LGIT…FSGI).

It belongs to the NqrDE/RnfAE family. In terms of assembly, composed of six subunits; NqrA, NqrB, NqrC, NqrD, NqrE and NqrF.

The protein localises to the cell inner membrane. The enzyme catalyses a ubiquinone + n Na(+)(in) + NADH + H(+) = a ubiquinol + n Na(+)(out) + NAD(+). Functionally, NQR complex catalyzes the reduction of ubiquinone-1 to ubiquinol by two successive reactions, coupled with the transport of Na(+) ions from the cytoplasm to the periplasm. NqrA to NqrE are probably involved in the second step, the conversion of ubisemiquinone to ubiquinol. This chain is Na(+)-translocating NADH-quinone reductase subunit E, found in Methylococcus capsulatus (strain ATCC 33009 / NCIMB 11132 / Bath).